Here is a 363-residue protein sequence, read N- to C-terminus: Protein-arginine kinase (363 aa).

Positions 24 to 255 constitute a Phosphagen kinase C-terminal domain; it reads IVLSSRIRLA…QQLIAQERAA (232 aa). ATP is bound by residues 27–31, H92, R126, 177–181, and 208–213; these read SSRIR, RASVM, and RGTYGE. The RDXXRA motif of the pArg binding pocket involved in allosteric regulation motif lies at 338-343; that stretch reads RDVRRA.

Belongs to the ATP:guanido phosphotransferase family.

It carries out the reaction L-arginyl-[protein] + ATP = N(omega)-phospho-L-arginyl-[protein] + ADP + H(+). Appears to be allosterically activated by the binding of pArg-containing polypeptides to the pArg-binding pocket localized in the C-terminal domain of McsB. Catalyzes the specific phosphorylation of arginine residues in a large number of proteins. Is part of the bacterial stress response system. Protein arginine phosphorylation has a physiologically important role and is involved in the regulation of many critical cellular processes, such as protein homeostasis, motility, competence, and stringent and stress responses, by regulating gene expression and protein activity. The chain is Protein-arginine kinase from Geobacillus thermodenitrificans (strain NG80-2).